The primary structure comprises 848 residues: Beta-galactosidase 13 (848 aa).

Residues M1–S27 form the signal peptide. An N-linked (GlcNAc...) asparagine glycan is attached at N107. The Proton donor role is filled by E200. Residue E271 is the Nucleophile of the active site. Residues N272, N303, N376, N398, N782, N787, and N817 are each glycosylated (N-linked (GlcNAc...) asparagine). An SUEL-type lectin domain is found at D754–G843.

This sequence belongs to the glycosyl hydrolase 35 family. In terms of tissue distribution, ubiquitous, with higher expression levels in roots, flowers and siliques.

The protein localises to the secreted. It is found in the extracellular space. Its subcellular location is the apoplast. The catalysed reaction is Hydrolysis of terminal non-reducing beta-D-galactose residues in beta-D-galactosides.. This is Beta-galactosidase 13 (BGAL13) from Arabidopsis thaliana (Mouse-ear cress).